A 245-amino-acid polypeptide reads, in one-letter code: Alanyl-tRNA editing protein AlaX-M (245 aa).

Residues His107, His111, Cys210, and His214 each contribute to the Zn(2+) site.

The protein belongs to the class-II aminoacyl-tRNA synthetase family. Editing domain AlaX-M subfamily. Requires Zn(2+) as cofactor.

It is found in the cytoplasm. Functions in trans to edit the amino acid moiety from mischarged charged tRNA(Ala). This Methanosarcina acetivorans (strain ATCC 35395 / DSM 2834 / JCM 12185 / C2A) protein is Alanyl-tRNA editing protein AlaX-M (alaXM).